The primary structure comprises 389 residues: Homoserine O-acetyltransferase (389 aa).

One can recognise an AB hydrolase-1 domain in the interval 63–371 (NAVLVLHALT…SSDYGHDGFL (309 aa)). The active-site Nucleophile is the serine 168. Arginine 240 provides a ligand contact to substrate. Residues aspartate 334 and histidine 367 contribute to the active site. Aspartate 368 lines the substrate pocket.

This sequence belongs to the AB hydrolase superfamily. MetX family. Homodimer.

Its subcellular location is the cytoplasm. It carries out the reaction L-homoserine + acetyl-CoA = O-acetyl-L-homoserine + CoA. The protein operates within amino-acid biosynthesis; L-methionine biosynthesis via de novo pathway; O-acetyl-L-homoserine from L-homoserine: step 1/1. Functionally, transfers an acetyl group from acetyl-CoA to L-homoserine, forming acetyl-L-homoserine. In Clavibacter michiganensis subsp. michiganensis (strain NCPPB 382), this protein is Homoserine O-acetyltransferase.